Here is a 2014-residue protein sequence, read N- to C-terminus: MAGTSQRPPSMYWCVGTEGLAVCPGPAMETHNGAEDMGSKLSLPGGSSTVQCPSMEEIHTAYKQRNLSRARDLLRGVCEESESSQEKGQLLSIAAAHGDLETVQFLLTEKRVELPTEPTDDNPAVVAAHFGHAEVVRELLESLPGPCTPQRLLNWMLALACQRGHLEVVKLLVLTHGADPENYAVRKNEFPVIVRLPLYAAIKAGNEDIAIFLLRHGAYFCSYILLDSPEPSKHLLRKYFIEASALPSSYPGKIALRVKWSHLKLPWVDLDWLLDISCQITELDLSANCLPSLPSIIPWGLINLKKLNLSNNQLGELPCVQSSDEIICSRLLEIDISSNKLSHLPPGFLHLSKLQKLTASKNYLERLFEEENATNWIGLRKLQELDLADNRLTELPVQFMHSFKSLTSLNVSRNNLKSFPDPWSCPLKCCKASKNALESLPDKMAVFWKSHLRDADFSENSLKEVPLGLFQLDALMFLRLQGNQLLSLPPQEKWTCTQLKTLDLSRNQLGKNEDGLKTKRISLFTTRGRQRSGTETASMLEFPAFLSESLEVLCLNDNHLDAVPPSVCLLKNLSELYLGNNPGLRELPPELGQLGNLWQLDIEDLNISNVPAEVRKEGPKATLSFLRAQLRKAEKCKLMKMILVGPPRQGKSTLLEILQTGKAPQLAHSEATIRTTKWELQRPAGSKAKVESVEFNVWDIGGPASMATVNQCFFTDKALYVVVWNLALGEEAVANLQFWLLNIEAKAPNAVVLVVGTHLDLIEAKFRVERIATLRAYVLALCRSPSGSRATGFPDITFKHLHEISCKNLEGQEGLRQLIFHVTCNMKDVGSTIGCQKLAGRLIPRSYISLQEAVLAEQQRRSLGDQVQYLTDRQLDQLVEQTPGNDIKDYEDLQSAISFLIETGTLLHFPDTSHGLRNLYFLDPIWLSECLQRIFNIKGSRSVAKNGVIQAEDLRMLLVGTGFTQQTEEQYFQFLAKFEIALPVANDSYLLPHLLPSKPGLDTHSMRHPMANTIQRVFKMSFVPVGFWQRFIARMLISLAEMDLQLFENKKNTKSRNRKVTIYSFTGSQRNRCSTFRVRRNQTIYWQEGLLVTFDGGYLSVESSDVNWKKKKSGGIKIICQSEMRDFSAMAFITDHVNSLIDQWFPALTATESDGTPLMEQYVPCPVCEASWAQHADPNERSESVQYFDMEDCVLTAIERDFISCPRHPDLPVPLQELVPELFMTDFPARLFLENSKLEHTEGENSILGQGGSGTVIYQARYQGQPVAVKRFHIKKFKNSANAPADTMLRHLRAMDAMKNFSDFRQEASMLHALQHPCIVSLIGISIHPLCFALELAPLGSLNTVLSENAKDSSFMPLGHMLTQKIAYQIASGLAYLHKKNIIFCDLKSDNILVWSLSAKEHINIKLSDYGISRQSFHEGALGVEGTPGYQAPEIRPRIVYDEKVDMFSYGMVLYELLSGQRPALGHHQLQIVKKLSKGIRPVLGQPEEVQFHRLQALMMECWDTKPEKRPLALSVVSQMKDPTFATFMYMLPCGKQSAFFSSQSQEYTVVFWDGKEESRNYTVVNTEKGLLEVQRMTCPGMKLSCQLKVQSSVWIATEDQKIYIYSLKGMCPLSVPQQALDTPAVVTCFLAVPVIKKNSFLVLAGLADGLVAVFPVARGTPKESCSYLCSHTANRSKFCIPDEDARQNPYPVKAMEVVNSGSEVWYSNGPGLLVIDCTILDISRRLEPYAAPSMVTSLVCSSDCRGEEMVWCLDDKANCLVMYHSATYQLCARYFCGDPNPLRDTFSVQPSVLETPGSHKTTSKGPVEECIADVSIMYSEELGTQILTHQDSLTDYCSMSSYSSSPPHQDPRSPSSLPSSLTSYSSVPFSANYEDSDRLQEPSVTSDRTEHDLSPMDGETFSQHLQAVKVLAVKDLIWVPRHGGDIIVIGLEKDSGAQRGRVIAVLKARELNRHGVLVDAAVVAKDTVVCSFANENTEWCLAVWRGWGAREFDIFYQSYEELGRLEACTRKRR.

ANK repeat units lie at residues 51-81 (QCPSMEEIHTAYKQRNLSRARDLLRGVCEES), 86-116 (EKGQLLSIAAAHGDLETVQFLLTEKRVELPT), 119-148 (TDDNPAVVAAHFGHAEVVRELLESLPGPCT), 152-182 (LLNWMLALACQRGHLEVVKLLVLTHGADPEN), and 193-222 (IVRLPLYAAIKAGNEDIAIFLLRHGAYFCS). LRR repeat units lie at residues 279–300 (QITELDLSANCLPSLPSIIPWG), 303–324 (NLKKLNLSNNQLGELPCVQSSD), 330–351 (RLLEIDISSNKLSHLPPGFLHL), 353–374 (KLQKLTASKNYLERLFEEENAT), 381–402 (KLQELDLADNRLTELPVQFMHS), 405–426 (SLTSLNVSRNNLKSFPDPWSCP), 427–447 (LKCCKASKNALESLPDKMAVF), 451–472 (HLRDADFSENSLKEVPLGLFQL), 474–495 (ALMFLRLQGNQLLSLPPQEKWT), 498–519 (QLKTLDLSRNQLGKNEDGLKTK), 549–570 (SLEVLCLNDNHLDAVPPSVCLL), 572–594 (NLSELYLGNNPGLRELPPELGQL), and 596–617 (NLWQLDIEDLNISNVPAEVRKE). In terms of domain architecture, Roc spans 632–826 (KAEKCKLMKM…QLIFHVTCNM (195 aa)). P647, R648, G650, K651, S652, T653, E670, H758, D760, C806, and K807 together coordinate GDP. The COR domain maps to 840 to 1237 (GRLIPRSYIS…PARLFLENSK (398 aa)). T1061 bears the Phosphothreonine mark. A phosphoserine mark is found at S1064 and S1074. A Phosphothreonine modification is found at T1075. Positions 1242-1525 (EGENSILGQG…VVSQMKDPTF (284 aa)) constitute a Protein kinase domain. Residues 1248–1256 (LGQGGSGTV) and K1270 contribute to the ATP site. Catalysis depends on D1386, which acts as the Proton acceptor. WD repeat units follow at residues 1539–1579 (AFFS…RMTC), 1582–1622 (MKLS…QALD), 1623–1668 (TPAV…SCSY), 1693–1729 (VKAMEVVNSGSEVWYSNGPGLLVIDCTILDISRRLEP), 1730–1778 (YAAP…YFCG), 1779–1948 (DPNP…AVLK), and 1950–1986 (RELNRHGVLVDAAVVAKDTVVCSFANENTEWCLAVWR). The WD40 loop; involved in dimer stabilization stretch occupies residues 1791–1906 (PSVLETPGSH…MDGETFSQHL (116 aa)). Residues 1839–1895 (SMSSYSSSPPHQDPRSPSSLPSSLTSYSSVPFSANYEDSDRLQEPSVTSDRTEHDLS) form a disordered region. Positions 1853–1871 (RSPSSLPSSLTSYSSVPFS) are enriched in low complexity.

The protein belongs to the protein kinase superfamily. TKL Ser/Thr protein kinase family. ROCO subfamily. In terms of assembly, homodimer. The homodimer is autoinhibited and stabilized by its N-terminal residues and ANK repeats. Interacts with CSK. Requires Mg(2+) as cofactor. Mn(2+) is required as a cofactor. In terms of processing, autophosphorylated. Autophosphorylation in inhibited in its dimeric state. Phosphorylated by protein kinase C isozymes PRKCA, PRKCB, PRKCG, PRKCE, PRKCZ and PRKCT at Ser-1064, Ser-1074 and Thr-1075. Phosphorylation at these residues activates the kinase activity of LRRK1 to phosphorylate RAB7A. In terms of tissue distribution, expressed in osteoclasts and bone marrow stromal cells.

It is found in the cytoplasm. The protein localises to the cell membrane. It carries out the reaction L-seryl-[protein] + ATP = O-phospho-L-seryl-[protein] + ADP + H(+). It catalyses the reaction L-threonyl-[protein] + ATP = O-phospho-L-threonyl-[protein] + ADP + H(+). With respect to regulation, activated by phosphorylation by PKC. Binds both GTP and GDP; binding of GTP stimulates kinase activity. Sterically autoinhibited in its dimeric state. Its function is as follows. Serine/threonine-protein kinase which phosphorylates RAB proteins involved in intracellular trafficking. Phosphorylates RAB7A; this activity is dependent on protein kinase C (PKC) activation. Plays a role in the negative regulation of bone mass, acting through the maturation of osteoclasts. This is Leucine-rich repeat serine/threonine-protein kinase 1 from Mus musculus (Mouse).